The primary structure comprises 122 residues: Large ribosomal subunit protein uL14 (122 aa).

This sequence belongs to the universal ribosomal protein uL14 family. In terms of assembly, part of the 50S ribosomal subunit. Forms a cluster with proteins L3 and L19. In the 70S ribosome, L14 and L19 interact and together make contacts with the 16S rRNA in bridges B5 and B8.

In terms of biological role, binds to 23S rRNA. Forms part of two intersubunit bridges in the 70S ribosome. The chain is Large ribosomal subunit protein uL14 from Elusimicrobium minutum (strain Pei191).